A 135-amino-acid polypeptide reads, in one-letter code: Nucleoside diphosphate kinase (135 aa).

The ATP site is built by Lys10, Phe58, Arg86, Thr92, Arg103, and Asn113. Residue His116 is the Pros-phosphohistidine intermediate of the active site.

This sequence belongs to the NDK family. As to quaternary structure, homotetramer. The cofactor is Mg(2+).

The protein localises to the cytoplasm. It carries out the reaction a 2'-deoxyribonucleoside 5'-diphosphate + ATP = a 2'-deoxyribonucleoside 5'-triphosphate + ADP. It catalyses the reaction a ribonucleoside 5'-diphosphate + ATP = a ribonucleoside 5'-triphosphate + ADP. Major role in the synthesis of nucleoside triphosphates other than ATP. The ATP gamma phosphate is transferred to the NDP beta phosphate via a ping-pong mechanism, using a phosphorylated active-site intermediate. This Nocardioides sp. (strain ATCC BAA-499 / JS614) protein is Nucleoside diphosphate kinase.